The sequence spans 315 residues: Glutaminase (315 aa).

Substrate is bound by residues Ser-70, Asn-120, Glu-166, Asn-173, Tyr-197, Tyr-249, and Val-267.

The protein belongs to the glutaminase family. Homotetramer.

The enzyme catalyses L-glutamine + H2O = L-glutamate + NH4(+). In Rhizobium meliloti (strain 1021) (Ensifer meliloti), this protein is Glutaminase.